The following is a 79-amino-acid chain: MSHKQIYYSDKYDDEEFEYRHVMLPKDIAKLVPKTHLMSESEWRNLGVQQSQGWVHYMIHEPEPHILLFRRPLPKKPKK.

Position 2 is an N-acetylserine (Ser2).

The protein belongs to the CKS family. In terms of assembly, forms a homohexamer that can probably bind six kinase subunits.

Its function is as follows. Binds to the catalytic subunit of the cyclin dependent kinases and is essential for their biological function. This chain is Cyclin-dependent kinases regulatory subunit 1 (CKS1B), found in Bos taurus (Bovine).